Consider the following 179-residue polypeptide: Peptide deformylase (179 aa).

Cysteine 102 and histidine 144 together coordinate Fe cation. The active site involves glutamate 145. Position 148 (histidine 148) interacts with Fe cation.

This sequence belongs to the polypeptide deformylase family. It depends on Fe(2+) as a cofactor.

The catalysed reaction is N-terminal N-formyl-L-methionyl-[peptide] + H2O = N-terminal L-methionyl-[peptide] + formate. Its function is as follows. Removes the formyl group from the N-terminal Met of newly synthesized proteins. Requires at least a dipeptide for an efficient rate of reaction. N-terminal L-methionine is a prerequisite for activity but the enzyme has broad specificity at other positions. The polypeptide is Peptide deformylase (Wolbachia pipientis wMel).